The following is a 718-amino-acid chain: Quinohemoprotein alcohol dehydrogenase ADH-IIG (718 aa).

Residues 1 to 29 (MRQTGLASLPLKSLAVAVLLSLAGTPALA) form the signal peptide. Glu92 contributes to the pyrroloquinoline quinone binding site. A disulfide bond links Cys138 and Cys139. Residues Arg144, Thr189, and 205-206 (GA) each bind pyrroloquinoline quinone. Glu207 serves as a coordination point for Ca(2+). Thr264 serves as a coordination point for pyrroloquinoline quinone. Ca(2+) is bound by residues Asn284 and Asp329. Residue Asp329 is the Proton acceptor of the active site. Lys356 contacts pyrroloquinoline quinone. Trp415 is a substrate binding site. Residues 419–420 (DW) and Ala571 each bind pyrroloquinoline quinone. Residues 622 to 699 (ASIEAGAKLY…QIHQYLIKRA (78 aa)) enclose the Cytochrome c domain. Cys635, Cys638, His639, and Met676 together coordinate heme c.

The protein belongs to the bacterial PQQ dehydrogenase family. In terms of assembly, monomer. Pyrroloquinoline quinone serves as cofactor. The cofactor is Ca(2+). Heme c is required as a cofactor.

The protein localises to the periplasm. It catalyses the reaction 2 oxidized [azurin] + a primary alcohol = 2 reduced [azurin] + an aldehyde + 2 H(+). Exhibits higher affinity for 1-butanol compared to 1,2-propanediol but inhibited by 10 mM 1-butanol. In terms of biological role, catalyzes the dye-linked oxidation of primary alcohols to the corresponding aldehydes and the (subsequent) oxidation of the aldehydes to carboxylic acids. Active with primary alcohols, glycerol, 1,2-propanediol, 1,3-propanediol but not with methanol or sugar alcohols such as D-sorbitol. The sequence is that of Quinohemoprotein alcohol dehydrogenase ADH-IIG from Pseudomonas putida (Arthrobacter siderocapsulatus).